We begin with the raw amino-acid sequence, 269 residues long: Imidazole glycerol phosphate synthase subunit HisF (269 aa).

Residues D23 and D142 contribute to the active site.

The protein belongs to the HisA/HisF family. As to quaternary structure, heterodimer of HisH and HisF.

The protein resides in the cytoplasm. The enzyme catalyses 5-[(5-phospho-1-deoxy-D-ribulos-1-ylimino)methylamino]-1-(5-phospho-beta-D-ribosyl)imidazole-4-carboxamide + L-glutamine = D-erythro-1-(imidazol-4-yl)glycerol 3-phosphate + 5-amino-1-(5-phospho-beta-D-ribosyl)imidazole-4-carboxamide + L-glutamate + H(+). The protein operates within amino-acid biosynthesis; L-histidine biosynthesis; L-histidine from 5-phospho-alpha-D-ribose 1-diphosphate: step 5/9. IGPS catalyzes the conversion of PRFAR and glutamine to IGP, AICAR and glutamate. The HisF subunit catalyzes the cyclization activity that produces IGP and AICAR from PRFAR using the ammonia provided by the HisH subunit. The sequence is that of Imidazole glycerol phosphate synthase subunit HisF from Bordetella pertussis (strain Tohama I / ATCC BAA-589 / NCTC 13251).